A 321-amino-acid polypeptide reads, in one-letter code: Peroxidase 70 (321 aa).

A signal peptide spans 1–25 (MASSSFTSLSVMVLLCLAAAAVASA). Pyrrolidone carboxylic acid is present on glutamine 26. Disulfide bonds link cysteine 36/cysteine 116, cysteine 69/cysteine 74, cysteine 122/cysteine 317, and cysteine 201/cysteine 226. The active-site Proton acceptor is histidine 67. Aspartate 68, valine 71, glycine 73, aspartate 75, and serine 77 together coordinate Ca(2+). Asparagine 81 is a glycosylation site (N-linked (GlcNAc...) asparagine). Proline 164 provides a ligand contact to substrate. An N-linked (GlcNAc...) asparagine glycan is attached at asparagine 172. Histidine 194 serves as a coordination point for heme b. Threonine 195 contributes to the Ca(2+) binding site. N-linked (GlcNAc...) asparagine glycosylation is present at asparagine 210. The Ca(2+) site is built by aspartate 241, threonine 244, and aspartate 249.

It belongs to the peroxidase family. Classical plant (class III) peroxidase subfamily. Requires heme b as cofactor. Ca(2+) serves as cofactor.

The protein localises to the secreted. It carries out the reaction 2 a phenolic donor + H2O2 = 2 a phenolic radical donor + 2 H2O. Its function is as follows. Removal of H(2)O(2), oxidation of toxic reductants, biosynthesis and degradation of lignin, suberization, auxin catabolism, response to environmental stresses such as wounding, pathogen attack and oxidative stress. These functions might be dependent on each isozyme/isoform in each plant tissue. The protein is Peroxidase 70 (PER70) of Zea mays (Maize).